A 620-amino-acid chain; its full sequence is Translation initiation factor IF-2 (620 aa).

A tr-type G domain is found at 126-295 (KRPPIVTIMG…IVTAEIMELK (170 aa)). The segment at 135-142 (GHVDHGKT) is G1. 135–142 (GHVDHGKT) is a GTP binding site. The tract at residues 160–164 (NITQS) is G2. The tract at residues 181–184 (DTPG) is G3. GTP is bound by residues 181-185 (DTPGH) and 235-238 (NKMD). The tract at residues 235-238 (NKMD) is G4. A G5 region spans residues 271–273 (SAL).

The protein belongs to the TRAFAC class translation factor GTPase superfamily. Classic translation factor GTPase family. IF-2 subfamily.

The protein localises to the cytoplasm. In terms of biological role, one of the essential components for the initiation of protein synthesis. Protects formylmethionyl-tRNA from spontaneous hydrolysis and promotes its binding to the 30S ribosomal subunits. Also involved in the hydrolysis of GTP during the formation of the 70S ribosomal complex. The polypeptide is Translation initiation factor IF-2 (Malacoplasma penetrans (strain HF-2) (Mycoplasma penetrans)).